Reading from the N-terminus, the 553-residue chain is ATP-dependent RNA helicase ROK1 (553 aa).

The Q motif signature appears at 120–148 (DMIGRFKIDKRVLSNLLDAEFVEPTPIQC). The 177-residue stretch at 151–327 (IPITLANRDL…HSIMKDPIRV (177 aa)) folds into the Helicase ATP-binding domain. 164 to 171 (APTGSGKT) is an ATP binding site. Positions 274-277 (DEAD) match the DEAD box motif. The Helicase C-terminal domain occupies 338 to 502 (TIEQKLVFTG…GLSDWMEDLG (165 aa)). Positions 528–553 (VIKQKRKQRQNMIEASKRRKQAESEQ) are disordered.

It belongs to the DEAD box helicase family. DDX52/ROK1 subfamily. Interacts with the U3 snoRNA and is associated with the 90S and 40S pre-ribosomes.

The protein localises to the nucleus. It is found in the nucleolus. It catalyses the reaction ATP + H2O = ADP + phosphate + H(+). Its function is as follows. ATP-dependent RNA helicase involved in 40S ribosomal subunit biogenesis. Required for the processing and cleavage of 35S pre-rRNA at sites A0, A1, and A2, leading to mature 18S rRNA. The polypeptide is ATP-dependent RNA helicase ROK1 (ROK1) (Lodderomyces elongisporus (strain ATCC 11503 / CBS 2605 / JCM 1781 / NBRC 1676 / NRRL YB-4239) (Yeast)).